The following is a 388-amino-acid chain: Zinc finger C2H2 protein ECU10_0150 (388 aa).

The C2H2-type zinc-finger motif lies at 299–322; that stretch reads YKCGFCGKAFESEKFIFNHFNNKH.

The protein is Zinc finger C2H2 protein ECU10_0150 of Encephalitozoon cuniculi (strain GB-M1) (Microsporidian parasite).